The chain runs to 570 residues: Molecular chaperone MKKS (570 aa).

192-199 (ERMVLGKS) lines the ATP pocket. Residues 198–370 (KSIIVPLKGQ…FHLLPNEATV (173 aa)) are substrate-binding apical domain.

Belongs to the TCP-1 chaperonin family. As to quaternary structure, component of a complex composed at least of MKKS, BBS10, BBS12, TCP1, CCT2, CCT3, CCT4, CCT5 and CCT8. Interacts with STUB1. Interacts with BBS2 (via coiled coil domain). Interacts with CCDC28B. Interacts with BBS12. Interacts with SMARCC1, a component of the SWI/SNF complexes; the interaction takes place predominantly in the cytoplasm and may modulate SMARCC1 location. Interacts with DLEC1. Widely expressed in adult and fetal tissues. Expressed in the developing heart, brain retina, limb buds, as well as in the developing neural tube. Expressed in the embryo in the first and second branchial arches. Expressed in parafin embedded tissue sections of brain, kidney, retina, olfactory epithelium and the ependymal layer of ventricles. Detected only in restricted regions of these tissue sections, including the ciliated border of renal tubules, the connecting cilium and the inner and outer nuclear layers of retina, and the ciliated layer of olfactory epithelia.

It is found in the cytoplasm. The protein resides in the cytoskeleton. It localises to the microtubule organizing center. Its subcellular location is the centrosome. The protein localises to the cytosol. It is found in the nucleus. Functionally, probable molecular chaperone that assists the folding of proteins upon ATP hydrolysis. Plays a role in the assembly of BBSome, a complex involved in ciliogenesis regulating transports vesicles to the cilia. May play a role in protein processing in limb, cardiac and reproductive system development. May play a role in cytokinesis. The chain is Molecular chaperone MKKS (Mkks) from Mus musculus (Mouse).